We begin with the raw amino-acid sequence, 427 residues long: Enolase (427 aa).

Gln163 lines the (2R)-2-phosphoglycerate pocket. Glu205 (proton donor) is an active-site residue. Asp242, Glu285, and Asp312 together coordinate Mg(2+). Residues Lys337, Arg366, Ser367, and Lys388 each coordinate (2R)-2-phosphoglycerate. Lys337 functions as the Proton acceptor in the catalytic mechanism.

Belongs to the enolase family. Mg(2+) is required as a cofactor.

Its subcellular location is the cytoplasm. It localises to the secreted. The protein localises to the cell surface. The enzyme catalyses (2R)-2-phosphoglycerate = phosphoenolpyruvate + H2O. It participates in carbohydrate degradation; glycolysis; pyruvate from D-glyceraldehyde 3-phosphate: step 4/5. Catalyzes the reversible conversion of 2-phosphoglycerate (2-PG) into phosphoenolpyruvate (PEP). It is essential for the degradation of carbohydrates via glycolysis. This is Enolase from Variovorax paradoxus (strain S110).